The sequence spans 437 residues: Aspartate--tRNA(Asp/Asn) ligase (437 aa).

Residue glutamate 175 participates in L-aspartate binding. The interval 197-200 (QLYK) is aspartate. An L-aspartate-binding site is contributed by arginine 219. Residues 219 to 221 (RAE), 227 to 229 (RHL), and glutamate 360 each bind ATP. 2 residues coordinate Mg(2+): glutamate 360 and serine 363. Residues serine 363 and arginine 367 each coordinate L-aspartate. 408-411 (GAER) is an ATP binding site.

The protein belongs to the class-II aminoacyl-tRNA synthetase family. Type 2 subfamily. As to quaternary structure, homodimer. Mg(2+) is required as a cofactor.

The protein localises to the cytoplasm. The catalysed reaction is tRNA(Asx) + L-aspartate + ATP = L-aspartyl-tRNA(Asx) + AMP + diphosphate. Functionally, aspartyl-tRNA synthetase with relaxed tRNA specificity since it is able to aspartylate not only its cognate tRNA(Asp) but also tRNA(Asn). Reaction proceeds in two steps: L-aspartate is first activated by ATP to form Asp-AMP and then transferred to the acceptor end of tRNA(Asp/Asn). This is Aspartate--tRNA(Asp/Asn) ligase from Methanothermobacter thermautotrophicus (strain ATCC 29096 / DSM 1053 / JCM 10044 / NBRC 100330 / Delta H) (Methanobacterium thermoautotrophicum).